Reading from the N-terminus, the 541-residue chain is Zinc finger protein 513 (541 aa).

Residues 1–118 (MPRRKQSHPQ…GEARGERPGP (118 aa)) are disordered. Over residues 44-57 (LEFEEEEEEEEGDG) the composition is skewed to acidic residues. A phosphoserine mark is found at S85 and S96. The segment covering 103–115 (EPARGPGEARGER) has biased composition (basic and acidic residues). C2H2-type zinc fingers lie at residues 150–172 (YSCRLCTFVSHYSSHLKRHMQTH), 178–200 (FRCGRCPYASAQLVNLTRHTRTH), 206–228 (YRCPHCPFACSSLGNLRRHQRTH), 360–382 (FACSLCPFATHYPNHLARHMKTH), 388–410 (FRCARCPYASAHLDNLKRHQRVH), 416–438 (YKCPLCPYACGNLANLKRHGRIH), 444–466 (FRCSLCNYSCNQSMNLKRHMLRH), and 472–494 (FRCATCAYTTGHWDNYKRHQKVH). A disordered region spans residues 492–541 (KVHGHGGAGGPGLSASEGWAPPHSPPSVLSSRGPPALGTAGSRAVHTDSS).

Belongs to the krueppel C2H2-type zinc-finger protein family. In terms of assembly, binds DNA. Can associate with the proximal promoter regions of PAX6 and SP4, and their known targets including ARR3, RHO, OPN1MW2 and OPN1SW. In the retina, expressed in the outer and inner nuclear layers, and the ganglion cell layer.

Its subcellular location is the nucleus. Transcriptional regulator that plays a role in retinal development and maintenance. In Homo sapiens (Human), this protein is Zinc finger protein 513 (ZNF513).